The sequence spans 168 residues: MEFQPVFAGAEISIINTLWYLIVFSILLLAVKHYAWGPVKDMMEKRRQKVIDDLDQAASDRKKAETLANEREAALKNSRQEATQILSDAKSNAQKTGKQIVSEAMAEASAIREKAKADAAQAETDALNEAREEVADLSVTIAEKVIAKNLSAADQKDLVDQFIKGLND.

A helical membrane pass occupies residues 11 to 31 (EISIINTLWYLIVFSILLLAV).

Belongs to the ATPase B chain family. As to quaternary structure, F-type ATPases have 2 components, F(1) - the catalytic core - and F(0) - the membrane proton channel. F(1) has five subunits: alpha(3), beta(3), gamma(1), delta(1), epsilon(1). F(0) has three main subunits: a(1), b(2) and c(10-14). The alpha and beta chains form an alternating ring which encloses part of the gamma chain. F(1) is attached to F(0) by a central stalk formed by the gamma and epsilon chains, while a peripheral stalk is formed by the delta and b chains.

Its subcellular location is the cell membrane. F(1)F(0) ATP synthase produces ATP from ADP in the presence of a proton or sodium gradient. F-type ATPases consist of two structural domains, F(1) containing the extramembraneous catalytic core and F(0) containing the membrane proton channel, linked together by a central stalk and a peripheral stalk. During catalysis, ATP synthesis in the catalytic domain of F(1) is coupled via a rotary mechanism of the central stalk subunits to proton translocation. Its function is as follows. Component of the F(0) channel, it forms part of the peripheral stalk, linking F(1) to F(0). This is ATP synthase subunit b from Lactobacillus delbrueckii subsp. bulgaricus (strain ATCC 11842 / DSM 20081 / BCRC 10696 / JCM 1002 / NBRC 13953 / NCIMB 11778 / NCTC 12712 / WDCM 00102 / Lb 14).